The sequence spans 341 residues: Src kinase-associated phosphoprotein 2 (341 aa).

A disordered region spans residues 54–95 (FKDRRDEEFPEPDEADTNDGGSLHSEQTDRDDENAYDGVQQS). Acidic residues predominate over residues 61–70 (EFPEPDEADT). The region spanning 105–208 (AVLKSGYLEK…WVEHIDFLIK (104 aa)) is the PH domain. The segment at 246-265 (EEDVPQPSKPKVTLVNKPPP) is disordered. The 62-residue stretch at 279–340 (DYANYFQGLW…PKEYLLELYV (62 aa)) folds into the SH3 domain.

It belongs to the SKAP family. Post-translationally, phosphorylated on tyrosines.

It localises to the cytoplasm. Functionally, may be involved in B-cell and macrophage adhesion processes. May play a role in src signaling pathway. This is Src kinase-associated phosphoprotein 2 (skap2) from Danio rerio (Zebrafish).